The sequence spans 215 residues: Sec-independent protein translocase protein TatB (215 aa).

The helical transmembrane segment at 1-21 (MLDIGWTELVVIAIVLIIVVG) threads the bilayer. Disordered stretches follow at residues 95-119 (DLQK…EPVN) and 138-215 (AVSS…KGDA). The segment covering 145-157 (QMDRAADVPKASE) has biased composition (basic and acidic residues). Residues 203 to 215 (SKTRAASRKKGDA) show a composition bias toward basic residues.

This sequence belongs to the TatB family. As to quaternary structure, the Tat system comprises two distinct complexes: a TatABC complex, containing multiple copies of TatA, TatB and TatC subunits, and a separate TatA complex, containing only TatA subunits. Substrates initially bind to the TatABC complex, which probably triggers association of the separate TatA complex to form the active translocon.

Its subcellular location is the cell inner membrane. Functionally, part of the twin-arginine translocation (Tat) system that transports large folded proteins containing a characteristic twin-arginine motif in their signal peptide across membranes. Together with TatC, TatB is part of a receptor directly interacting with Tat signal peptides. TatB may form an oligomeric binding site that transiently accommodates folded Tat precursor proteins before their translocation. The chain is Sec-independent protein translocase protein TatB from Rhizobium meliloti (strain 1021) (Ensifer meliloti).